Consider the following 349-residue polypeptide: DNA polymerase IV (349 aa).

The 182-residue stretch at 7–188 folds into the UmuC domain; that stretch reads IIHIDMDYFF…LPVKKLFGVG (182 aa). 2 residues coordinate Mg(2+): D11 and D106. Residue E107 is part of the active site.

The protein belongs to the DNA polymerase type-Y family. In terms of assembly, monomer. The cofactor is Mg(2+).

It localises to the cytoplasm. The catalysed reaction is DNA(n) + a 2'-deoxyribonucleoside 5'-triphosphate = DNA(n+1) + diphosphate. Functionally, poorly processive, error-prone DNA polymerase involved in untargeted mutagenesis. Copies undamaged DNA at stalled replication forks, which arise in vivo from mismatched or misaligned primer ends. These misaligned primers can be extended by PolIV. Exhibits no 3'-5' exonuclease (proofreading) activity. May be involved in translesional synthesis, in conjunction with the beta clamp from PolIII. The chain is DNA polymerase IV from Francisella tularensis subsp. holarctica (strain OSU18).